A 984-amino-acid chain; its full sequence is Putative formate dehydrogenase SA2102 (984 aa).

In terms of domain architecture, 2Fe-2S ferredoxin-type spans 3–79 (EHLVVTLDGK…PMTVNTVNND (77 aa)). Positions 37, 48, 51, and 63 each coordinate [2Fe-2S] cluster. The 41-residue stretch at 79–119 (DVKDAQKEALDRILEKHMLYCTVCDYNNGDCEIHNTMDAWG) folds into the 4Fe-4S His(Cys)3-ligated-type domain. [4Fe-4S] cluster-binding residues include histidine 95, cysteine 99, cysteine 102, cysteine 109, cysteine 147, cysteine 150, cysteine 153, cysteine 157, cysteine 190, cysteine 193, cysteine 196, cysteine 200, cysteine 264, cysteine 267, cysteine 271, and cysteine 299. 2 4Fe-4S ferredoxin-type domains span residues 138 to 165 (PFYR…VNET) and 181 to 211 (NDVP…VNME). A formate dehydrogenase region spans residues 252-984 (MRKERIKKTK…YVFPGNQVDK (733 aa)). Residues 257-313 (IKKTKTVCTYCGVGCSFEVWTKDREILKVQPSHDSPANKIATCVKGKFSWGHINSDQ) form the 4Fe-4S Mo/W bis-MGD-type domain.

In the C-terminal section; belongs to the prokaryotic molybdopterin-containing oxidoreductase family. [2Fe-2S] cluster is required as a cofactor. The cofactor is [4Fe-4S] cluster. Mo-bis(molybdopterin guanine dinucleotide) serves as cofactor.

The enzyme catalyses formate + NAD(+) = CO2 + NADH. This is Putative formate dehydrogenase SA2102 from Staphylococcus aureus (strain N315).